We begin with the raw amino-acid sequence, 348 residues long: Dihydroorotase (348 aa).

Zn(2+)-binding residues include His14 and His16. Residues 16–18 (HLR) and Asn42 each bind substrate. 3 residues coordinate Zn(2+): Lys100, His137, and His175. Position 100 is an N6-carboxylysine (Lys100). Substrate is bound at residue His137. Leu220 provides a ligand contact to substrate. Position 248 (Asp248) interacts with Zn(2+). Residue Asp248 is part of the active site. Positions 252 and 264 each coordinate substrate.

Belongs to the metallo-dependent hydrolases superfamily. DHOase family. Class II DHOase subfamily. As to quaternary structure, homodimer. The cofactor is Zn(2+).

It carries out the reaction (S)-dihydroorotate + H2O = N-carbamoyl-L-aspartate + H(+). It functions in the pathway pyrimidine metabolism; UMP biosynthesis via de novo pathway; (S)-dihydroorotate from bicarbonate: step 3/3. Its function is as follows. Catalyzes the reversible cyclization of carbamoyl aspartate to dihydroorotate. The sequence is that of Dihydroorotase from Pseudomonas aeruginosa (strain ATCC 15692 / DSM 22644 / CIP 104116 / JCM 14847 / LMG 12228 / 1C / PRS 101 / PAO1).